Consider the following 293-residue polypeptide: Epimerase family protein SDR39U1 (293 aa).

NADP(+)-binding positions include 31 to 32 (SR), 58 to 59 (LA), Glu-77, Arg-82, and Val-160.

It belongs to the NAD(P)-dependent epimerase/dehydratase family. SDR39U1 subfamily. As to expression, expressed in adrenal gland.

Its function is as follows. Putative NADP-dependent oxidoreductase. In Homo sapiens (Human), this protein is Epimerase family protein SDR39U1 (SDR39U1).